The chain runs to 1000 residues: Putative methyl-accepting chemotaxis protein sll0041 (1000 aa).

A disordered region spans residues 1–59; sequence MTQNPSSDRRPDTAQSVANGETLDGALFTGLTDTAAAQDESSETSASFATIDGEDKSEV. GAF domains follow at residues 342-478 and 509-650; these read EIQG…QTTL and NSEQ…GLAL. The region spanning 671-722 is the HAMP domain; the sequence is EKMQKRALELLMEVDPVSRGDLTIRAHVTEDEIGTIADSYNATIESLRRIVT. Residues 727–963 form the Methyl-accepting transducer domain; sequence AASQFTETTD…SVTQTMALVA (237 aa).

Belongs to the methyl-accepting chemotaxis (MCP) protein family.

The chain is Putative methyl-accepting chemotaxis protein sll0041 from Synechocystis sp. (strain ATCC 27184 / PCC 6803 / Kazusa).